The chain runs to 416 residues: Na(+)/H(+) antiporter NhaA (416 aa).

The next 11 helical transmembrane spans lie at 39 to 59 (GIVLLIAAAAALAWANSPWAA), 82 to 102 (LHFWVNDALMTVFFLVVGLEI), 119 to 139 (LPVLAALGGVAVPALLYLALV), 146 to 166 (GWAVPTATDIAFAVGVLALLG), 175 to 195 (VFLLTLAIIDDLVAVLIIALF), 198 to 218 (GGLQWPMFGIAALGLAGVLLL), 234 to 254 (AVLWWGIWQTGAHPTLAGVVL), 281 to 301 (PWVTFGVMPLFALANAGVALG), 315 to 335 (LLMAAVAVALVAGKPLGVLLA), 353 to 373 (WGGLLLTGLLAGIGFTMAIFI), and 390 to 410 (GVLLASGLAALLGLAWGWWLQ).

It belongs to the NhaA Na(+)/H(+) (TC 2.A.33) antiporter family.

It is found in the cell inner membrane. The catalysed reaction is Na(+)(in) + 2 H(+)(out) = Na(+)(out) + 2 H(+)(in). Functionally, na(+)/H(+) antiporter that extrudes sodium in exchange for external protons. The protein is Na(+)/H(+) antiporter NhaA of Acidovorax sp. (strain JS42).